Consider the following 500-residue polypeptide: L-aspartate semialdehyde sulfurtransferase (500 aa).

The active-site Cysteine persulfide intermediate is the cysteine 131. CBS domains are found at residues 384–441 (MADF…IFDS) and 446–500 (MTKK…ARRY).

This sequence belongs to the L-aspartate semialdehyde sulfurtransferase family. In terms of assembly, forms homodimers. May form a complex with MA_1822.

It carries out the reaction L-aspartate 4-semialdehyde + reduced 2[4Fe-4S]-[ferredoxin] + hydrogen sulfide + 3 H(+) = oxidized 2[4Fe-4S]-[ferredoxin] + L-homocysteine + H2O. It functions in the pathway amino-acid biosynthesis. Its function is as follows. Required for O-acetylhomoserine sulfhydrylase (OAHS)-independent homocysteine (Hcy) biosynthesis. Together with MA_1822, catalyzes the condensation of sulfide with aspartate semialdehyde to generate homocysteine. Likely functions through persulfide intermediate. This chain is L-aspartate semialdehyde sulfurtransferase, found in Methanosarcina acetivorans (strain ATCC 35395 / DSM 2834 / JCM 12185 / C2A).